The chain runs to 450 residues: Glutamate--tRNA ligase 2 (450 aa).

Residues 10–20 (PSPTGFLHIGG) carry the 'HIGH' region motif. Positions 232–236 (KLSKR) match the 'KMSKS' region motif. Position 235 (Lys-235) interacts with ATP.

It belongs to the class-I aminoacyl-tRNA synthetase family. Glutamate--tRNA ligase type 1 subfamily. In terms of assembly, monomer.

It is found in the cytoplasm. It catalyses the reaction tRNA(Glu) + L-glutamate + ATP = L-glutamyl-tRNA(Glu) + AMP + diphosphate. In terms of biological role, catalyzes the attachment of glutamate to tRNA(Glu) in a two-step reaction: glutamate is first activated by ATP to form Glu-AMP and then transferred to the acceptor end of tRNA(Glu). The sequence is that of Glutamate--tRNA ligase 2 from Wolbachia pipientis subsp. Culex pipiens (strain wPip).